A 466-amino-acid polypeptide reads, in one-letter code: 3-isopropylmalate dehydratase large subunit (466 aa).

C347, C408, and C411 together coordinate [4Fe-4S] cluster.

The protein belongs to the aconitase/IPM isomerase family. LeuC type 1 subfamily. In terms of assembly, heterodimer of LeuC and LeuD. The cofactor is [4Fe-4S] cluster.

It catalyses the reaction (2R,3S)-3-isopropylmalate = (2S)-2-isopropylmalate. It functions in the pathway amino-acid biosynthesis; L-leucine biosynthesis; L-leucine from 3-methyl-2-oxobutanoate: step 2/4. Its function is as follows. Catalyzes the isomerization between 2-isopropylmalate and 3-isopropylmalate, via the formation of 2-isopropylmaleate. This Herminiimonas arsenicoxydans protein is 3-isopropylmalate dehydratase large subunit.